Here is a 198-residue protein sequence, read N- to C-terminus: Ribonuclease HII (198 aa).

The 188-residue stretch at 11-198 (NLIAGVDEVG…GPVKRVLGLV (188 aa)) folds into the RNase H type-2 domain. The a divalent metal cation site is built by aspartate 17, glutamate 18, and aspartate 109.

This sequence belongs to the RNase HII family. Mn(2+) serves as cofactor. It depends on Mg(2+) as a cofactor.

It localises to the cytoplasm. It carries out the reaction Endonucleolytic cleavage to 5'-phosphomonoester.. Endonuclease that specifically degrades the RNA of RNA-DNA hybrids. This chain is Ribonuclease HII, found in Yersinia enterocolitica serotype O:8 / biotype 1B (strain NCTC 13174 / 8081).